Consider the following 150-residue polypeptide: Large ribosomal subunit protein bL9 (150 aa).

It belongs to the bacterial ribosomal protein bL9 family.

Its function is as follows. Binds to the 23S rRNA. This chain is Large ribosomal subunit protein bL9, found in Saccharopolyspora erythraea (strain ATCC 11635 / DSM 40517 / JCM 4748 / NBRC 13426 / NCIMB 8594 / NRRL 2338).